We begin with the raw amino-acid sequence, 141 residues long: Hemoglobin subunit alpha-D (141 aa).

Residues 1–141 (MLTAEDKKLI…VSAVLAEKYR (141 aa)) enclose the Globin domain. 2 residues coordinate heme b: His-58 and His-87.

This sequence belongs to the globin family. In terms of assembly, heterotetramer of two alpha-D chains and two beta chains. In terms of tissue distribution, red blood cells.

Functionally, involved in oxygen transport from the lung to the various peripheral tissues. This is Hemoglobin subunit alpha-D (HBAD) from Meleagris gallopavo (Wild turkey).